The sequence spans 709 residues: Fatty acid oxidation complex subunit alpha (709 aa).

Positions 1–188 are enoyl-CoA hydratase; that stretch reads MEKTFNLTRR…KMGLVNDVVP (188 aa). The interval 308 to 709 is 3-hydroxyacyl-CoA dehydrogenase; sequence RKVKKAVILG…AMAAEKARFF (402 aa).

In the N-terminal section; belongs to the enoyl-CoA hydratase/isomerase family. The protein in the central section; belongs to the 3-hydroxyacyl-CoA dehydrogenase family. In terms of assembly, heterotetramer of two alpha chains (FadJ) and two beta chains (FadI).

The protein localises to the cytoplasm. It carries out the reaction a (3S)-3-hydroxyacyl-CoA = a (2E)-enoyl-CoA + H2O. The enzyme catalyses a 4-saturated-(3S)-3-hydroxyacyl-CoA = a (3E)-enoyl-CoA + H2O. It catalyses the reaction a (3S)-3-hydroxyacyl-CoA + NAD(+) = a 3-oxoacyl-CoA + NADH + H(+). The catalysed reaction is (3S)-3-hydroxybutanoyl-CoA = (3R)-3-hydroxybutanoyl-CoA. It participates in lipid metabolism; fatty acid beta-oxidation. In terms of biological role, catalyzes the formation of a hydroxyacyl-CoA by addition of water on enoyl-CoA. Also exhibits 3-hydroxyacyl-CoA epimerase and 3-hydroxyacyl-CoA dehydrogenase activities. The chain is Fatty acid oxidation complex subunit alpha from Shewanella sp. (strain ANA-3).